The sequence spans 513 residues: 2,3-bisphosphoglycerate-independent phosphoglycerate mutase (513 aa).

Mn(2+)-binding residues include D14 and S64. Catalysis depends on S64, which acts as the Phosphoserine intermediate. Substrate-binding positions include H125, 155 to 156 (RD), R187, R193, 259 to 262 (RADR), and K333. Residues D400, H404, D441, H442, and H460 each coordinate Mn(2+).

Belongs to the BPG-independent phosphoglycerate mutase family. As to quaternary structure, monomer. Requires Mn(2+) as cofactor.

It carries out the reaction (2R)-2-phosphoglycerate = (2R)-3-phosphoglycerate. It participates in carbohydrate degradation; glycolysis; pyruvate from D-glyceraldehyde 3-phosphate: step 3/5. In terms of biological role, catalyzes the interconversion of 2-phosphoglycerate and 3-phosphoglycerate. The protein is 2,3-bisphosphoglycerate-independent phosphoglycerate mutase of Pseudomonas fluorescens (strain ATCC BAA-477 / NRRL B-23932 / Pf-5).